A 151-amino-acid chain; its full sequence is UPF0208 membrane protein SG1605 (151 aa).

2 helical membrane-spanning segments follow: residues F46 to A64 and G70 to L90.

This sequence belongs to the UPF0208 family.

The protein resides in the cell inner membrane. The protein is UPF0208 membrane protein SG1605 of Sodalis glossinidius (strain morsitans).